The primary structure comprises 331 residues: Holliday junction branch migration complex subunit RuvB (331 aa).

The interval 1 to 178 (MRNSIFEQEE…FGITLRLDFY (178 aa)) is large ATPase domain (RuvB-L). Residues Leu17, Arg18, Gly59, Lys62, Thr63, Thr64, 125–127 (EDY), Arg168, Tyr178, and Arg215 each bind ATP. Thr63 lines the Mg(2+) pocket. Residues 179–249 (TVSELLQLLQ…FADLALNKME (71 aa)) are small ATPAse domain (RuvB-S). Residues 252 to 331 (QFGLDKLDYT…LSTINSARLP (80 aa)) form a head domain (RuvB-H) region. Residues Arg307 and Arg312 each coordinate DNA.

This sequence belongs to the RuvB family. Homohexamer. Forms an RuvA(8)-RuvB(12)-Holliday junction (HJ) complex. HJ DNA is sandwiched between 2 RuvA tetramers; dsDNA enters through RuvA and exits via RuvB. An RuvB hexamer assembles on each DNA strand where it exits the tetramer. Each RuvB hexamer is contacted by two RuvA subunits (via domain III) on 2 adjacent RuvB subunits; this complex drives branch migration. In the full resolvosome a probable DNA-RuvA(4)-RuvB(12)-RuvC(2) complex forms which resolves the HJ.

The protein resides in the cytoplasm. The enzyme catalyses ATP + H2O = ADP + phosphate + H(+). Its function is as follows. The RuvA-RuvB-RuvC complex processes Holliday junction (HJ) DNA during genetic recombination and DNA repair, while the RuvA-RuvB complex plays an important role in the rescue of blocked DNA replication forks via replication fork reversal (RFR). RuvA specifically binds to HJ cruciform DNA, conferring on it an open structure. The RuvB hexamer acts as an ATP-dependent pump, pulling dsDNA into and through the RuvAB complex. RuvB forms 2 homohexamers on either side of HJ DNA bound by 1 or 2 RuvA tetramers; 4 subunits per hexamer contact DNA at a time. Coordinated motions by a converter formed by DNA-disengaged RuvB subunits stimulates ATP hydrolysis and nucleotide exchange. Immobilization of the converter enables RuvB to convert the ATP-contained energy into a lever motion, pulling 2 nucleotides of DNA out of the RuvA tetramer per ATP hydrolyzed, thus driving DNA branch migration. The RuvB motors rotate together with the DNA substrate, which together with the progressing nucleotide cycle form the mechanistic basis for DNA recombination by continuous HJ branch migration. Branch migration allows RuvC to scan DNA until it finds its consensus sequence, where it cleaves and resolves cruciform DNA. In Neorickettsia sennetsu (strain ATCC VR-367 / Miyayama) (Ehrlichia sennetsu), this protein is Holliday junction branch migration complex subunit RuvB.